The sequence spans 242 residues: Prosalusin (242 aa).

The N-terminal stretch at 1-26 (MAAATRGCRPWGSLLGLLGLVSAAAA) is a signal peptide. A propeptide spanning residues 27 to 189 (AWDLASLRCT…SSWVVYGTNY (163 aa)) is cleaved from the precursor. Position 93 to 100 (93 to 100 (GWTGTGKS)) interacts with ATP. N-linked (GlcNAc...) asparagine glycosylation is present at N149. The disordered stretch occupies residues 210–242 (PPRRSGALPPAPAAPRPALRAQRAGPAGPGAKG). Over residues 225-235 (RPALRAQRAGP) the composition is skewed to low complexity. A Lysine amide modification is found at K241.

The protein belongs to the ClpA/ClpB family. Torsin subfamily. In terms of processing, amidation of salusin-alpha(29-Gly) by peptidylglycine alpha-amidating monooxygenase, PAM, converts Lys-241-Gly-242 to Lys-241-NH2 and gives raise to salusin-alpha. As to expression, isoform 4 is ubiquitously expressed, with high level in vascular endothelial cells and vascular smooth muscle cells.

Its subcellular location is the secreted. Salusins -alpha and -beta may be endocrine and/or paracrine factors able to increase intracellular calcium concentrations and induce cell mitogenesis. Salusins may also be potent hypotensive peptides. The sequence is that of Prosalusin (TOR2A) from Homo sapiens (Human).